The chain runs to 448 residues: Eukaryotic translation initiation factor 3 subunit E (448 aa).

A PCI domain is found at 254 to 423 (TDLFFSPAYI…GTVIMNHPPQ (170 aa)).

It belongs to the eIF-3 subunit E family. In terms of assembly, component of the eukaryotic translation initiation factor 3 (eIF-3) complex.

The protein resides in the cytoplasm. In terms of biological role, component of the eukaryotic translation initiation factor 3 (eIF-3) complex, which is involved in protein synthesis of a specialized repertoire of mRNAs and, together with other initiation factors, stimulates binding of mRNA and methionyl-tRNAi to the 40S ribosome. The eIF-3 complex specifically targets and initiates translation of a subset of mRNAs involved in cell proliferation. This Emericella nidulans (strain FGSC A4 / ATCC 38163 / CBS 112.46 / NRRL 194 / M139) (Aspergillus nidulans) protein is Eukaryotic translation initiation factor 3 subunit E (int6).